A 415-amino-acid chain; its full sequence is Proline-serine-threonine phosphatase-interacting protein 1 (415 aa).

The F-BAR domain occupies 5-264; it reads LQFRDAFWCR…TLEGCDVEGD (260 aa). Coiled-coil stretches lie at residues 94–133 and 162–215; these read LALA…KLSL and SANG…TCEA. The residue at position 318 (Ser-318) is a Phosphoserine. Residue Tyr-344 is modified to Phosphotyrosine; by ABL1. The SH3 domain maps to 358-415; sequence SSAQDYRALYDYTAQNSDELDISAGDILAVILEGEDGWWTVERNGQRGFVPGSYLEKL.

As to quaternary structure, homodimer. Homotrimer. Interacts (via coiled-coil domain) with CD2AP, PTPN12 and PTPN18. Interacts (via SH3 domain) with ABL1 and WAS. Interacts (via SH3 and coiled-coil domains) with MEFV (via B-box zinc finger); the interaction allows binding of MEFV to PYCARD and facilitates formation of PYCARD pyroptosomes. Interacts with DNM2 and FASLG. Interacts with CD2. Post-translationally, dephosphorylated on Tyr-344 by PTPN18, this event negatively regulates the association of PSTPIP1 with SH2 domain-containing proteins as tyrosine kinase. Phosphorylation of Tyr-344 is probably required for subsequent phosphorylation at other tyrosine residues. Phosphorylation is induced by activation of the EGFR and PDGFR in a ABL1 dependent manner. The phosphorylation regulates the interaction with WAS and with MEFV. Highly expressed in adult lung and spleen, and weakly expressed in testis, muscle, kidney, brain and heart. Highly expressed in spleen and thymus, moderately in lung, brain and muscle, and weakly expressed in heart and liver (at protein level).

It localises to the cytoplasm. The protein resides in the perinuclear region. Its subcellular location is the cell projection. It is found in the lamellipodium. The protein localises to the cleavage furrow. It localises to the cytoskeleton. The protein resides in the cell membrane. Its subcellular location is the uropodium. In terms of biological role, involved in regulation of the actin cytoskeleton. May regulate WAS actin-bundling activity. Bridges the interaction between ABL1 and PTPN18 leading to ABL1 dephosphorylation. May play a role as a scaffold protein between PTPN12 and WAS and allow PTPN12 to dephosphorylate WAS. Has the potential to physically couple CD2 and CD2AP to WAS. Acts downstream of CD2 and CD2AP to recruit WAS to the T-cell:APC contact site so as to promote the actin polymerization required for synapse induction during T-cell activation. Down-regulates CD2-stimulated adhesion through the coupling of PTPN12 to CD2. Also has a role in innate immunity and the inflammatory response. Recruited to inflammasomes by MEFV. Induces formation of pyroptosomes, large supramolecular structures composed of oligomerized PYCARD dimers which form prior to inflammatory apoptosis. Binding to MEFV allows MEFV to bind to PYCARD and facilitates pyroptosome formation. Regulates endocytosis and cell migration in neutrophils. This chain is Proline-serine-threonine phosphatase-interacting protein 1 (Pstpip1), found in Mus musculus (Mouse).